Here is a 161-residue protein sequence, read N- to C-terminus: Zinc finger protein KNUCKLES (161 aa).

The tract at residues methionine 1–alanine 33 is disordered. The segment at phenylalanine 38 to histidine 60 adopts a C2H2-type zinc-finger fold. Residues glycine 142 to leucine 161 are disordered. The EAR-like (transcriptional repression) signature appears at leucine 155–leucine 159.

First expressed in developing carpel primordia, and later in stamens and ovules of flower buds.

The protein resides in the nucleus. In terms of biological role, may function as a transcriptional repressor of cellular proliferation that regulates floral determinacy and relative size of basal pattern elements along the proximo-distal axis of the developing gynoecium. This Arabidopsis thaliana (Mouse-ear cress) protein is Zinc finger protein KNUCKLES (KNU).